A 656-amino-acid polypeptide reads, in one-letter code: Hemocyanin subunit A (656 aa).

An N-terminal signal peptide occupies residues 1–18 (MWSLALATLFVLGTVIRA). Residues H197, H201, and H227 each contribute to the Cu cation site. N313 carries N-linked (GlcNAc...) asparagine glycosylation. Cu cation contacts are provided by H348, H352, and H388. C558 and C606 are disulfide-bonded.

It belongs to the tyrosinase family. Hemocyanin subfamily. 36-chain polymer consisting of 6 hexamers, each of which includes 4 different chains, A, B, C and D. In terms of tissue distribution, hemolymph.

The protein localises to the secreted. It is found in the extracellular space. Hemocyanins are copper-containing oxygen carriers occurring freely dissolved in the hemolymph of many mollusks and arthropods. In Scutigera coleoptrata (House centipede), this protein is Hemocyanin subunit A (HCA).